Consider the following 286-residue polypeptide: Polyamine aminopropyltransferase (286 aa).

Positions 9–242 (NGWIDEHHQG…GWWSWTFAAI (234 aa)) constitute a PABS domain. Q36 contacts S-methyl-5'-thioadenosine. Spermidine is bound by residues H67 and D91. S-methyl-5'-thioadenosine is bound by residues E111 and 143–144 (NG). D162 serves as the catalytic Proton acceptor. P169 provides a ligand contact to S-methyl-5'-thioadenosine.

The protein belongs to the spermidine/spermine synthase family. As to quaternary structure, homodimer or homotetramer.

Its subcellular location is the cytoplasm. It carries out the reaction S-adenosyl 3-(methylsulfanyl)propylamine + putrescine = S-methyl-5'-thioadenosine + spermidine + H(+). It participates in amine and polyamine biosynthesis; spermidine biosynthesis; spermidine from putrescine: step 1/1. Functionally, catalyzes the irreversible transfer of a propylamine group from the amino donor S-adenosylmethioninamine (decarboxy-AdoMet) to putrescine (1,4-diaminobutane) to yield spermidine. This Prochlorococcus marinus (strain MIT 9313) protein is Polyamine aminopropyltransferase.